Here is a 115-residue protein sequence, read N- to C-terminus: Toxin-like structure LSTX-R1 (115 aa).

Positions 1 to 18 (MKLSLIIIATSLVIAVVA) are cleaved as a signal peptide. A propeptide spanning residues 19–51 (FPSKDSAATDFDKTESLENVEERVETALDERPR) is cleaved from the precursor.

Belongs to the neurotoxin 25 family. F7 subfamily. Contains 4 disulfide bonds. Expressed by the venom gland.

Its subcellular location is the secreted. This is Toxin-like structure LSTX-R1 from Lycosa singoriensis (Wolf spider).